The sequence spans 275 residues: TATA-box-binding protein (275 aa).

Disordered regions lie at residues 23-45 and 73-92; these read EDES…FGMN and GSMS…HTPA. 2 consecutive repeat copies span residues 103–179 and 193–270.

Belongs to the TBP family. Belongs to the TFIID complex together with the TBP-associated factors (TAFs). Binds DNA as monomer.

It is found in the nucleus. Functionally, general transcription factor that functions at the core of the DNA-binding multiprotein factor TFIID. Binding of TFIID to the TATA box is the initial transcriptional step of the pre-initiation complex (PIC), playing a role in the activation of eukaryotic genes transcribed by RNA polymerase II. The chain is TATA-box-binding protein from Artemia franciscana (Brine shrimp).